Here is a 637-residue protein sequence, read N- to C-terminus: DNA mismatch repair protein MutL (637 aa).

Residues 353 to 371 (GQGQRPVSSASMPSASRQA) are compositionally biased toward polar residues. The tract at residues 353-444 (GQGQRPVSSA…SEAASETPHD (92 aa)) is disordered. A compositionally biased stretch (basic and acidic residues) spans 378-389 (DWIKEGVQDWDW). A compositionally biased stretch (pro residues) spans 396–406 (PQNPPQNPPPG). Residues 430-444 (SGKELSEAASETPHD) are compositionally biased toward basic and acidic residues.

The protein belongs to the DNA mismatch repair MutL/HexB family.

In terms of biological role, this protein is involved in the repair of mismatches in DNA. It is required for dam-dependent methyl-directed DNA mismatch repair. May act as a 'molecular matchmaker', a protein that promotes the formation of a stable complex between two or more DNA-binding proteins in an ATP-dependent manner without itself being part of a final effector complex. The chain is DNA mismatch repair protein MutL from Beijerinckia indica subsp. indica (strain ATCC 9039 / DSM 1715 / NCIMB 8712).